The following is a 246-amino-acid chain: Acetoacetate decarboxylase (246 aa).

Lys116 functions as the Schiff-base intermediate with acetoacetate in the catalytic mechanism.

The protein belongs to the ADC family.

It carries out the reaction acetoacetate + H(+) = acetone + CO2. Its function is as follows. Catalyzes the conversion of acetoacetate to acetone and carbon dioxide. The chain is Acetoacetate decarboxylase from Burkholderia ambifaria (strain MC40-6).